A 671-amino-acid chain; its full sequence is tRNA 5-methylaminomethyl-2-thiouridine biosynthesis bifunctional protein MnmC (671 aa).

A tRNA (mnm(5)s(2)U34)-methyltransferase region spans residues 1 to 245; sequence MVNVMNTLSF…KREMLWGEKP (245 aa). An FAD-dependent cmnm(5)s(2)U34 oxidoreductase region spans residues 272–671; it reads VGGGVASLFV…RKLLKGSKVE (400 aa).

The protein in the N-terminal section; belongs to the methyltransferase superfamily. tRNA (mnm(5)s(2)U34)-methyltransferase family. It in the C-terminal section; belongs to the DAO family. The cofactor is FAD.

It is found in the cytoplasm. It carries out the reaction 5-aminomethyl-2-thiouridine(34) in tRNA + S-adenosyl-L-methionine = 5-methylaminomethyl-2-thiouridine(34) in tRNA + S-adenosyl-L-homocysteine + H(+). Functionally, catalyzes the last two steps in the biosynthesis of 5-methylaminomethyl-2-thiouridine (mnm(5)s(2)U) at the wobble position (U34) in tRNA. Catalyzes the FAD-dependent demodification of cmnm(5)s(2)U34 to nm(5)s(2)U34, followed by the transfer of a methyl group from S-adenosyl-L-methionine to nm(5)s(2)U34, to form mnm(5)s(2)U34. The sequence is that of tRNA 5-methylaminomethyl-2-thiouridine biosynthesis bifunctional protein MnmC from Actinobacillus pleuropneumoniae serotype 5b (strain L20).